A 463-amino-acid chain; its full sequence is Interferon-inducible GTPase 5 (463 aa).

The IRG-type G domain maps to 53–235 (IRLEVGVTGE…PTLVSTWEHD (183 aa)). GTP-binding positions include 62 to 69 (ESGAGKSS), 87 to 91 (TGVME), 169 to 171 (KVD), and 216 to 218 (SNL). 2 positions are modified to phosphoserine: serine 247 and serine 304. The tract at residues 404 to 437 (LEDDEPQPEVSLEVASDNGVEKGGSGEGGGEEAP) is disordered.

It belongs to the TRAFAC class dynamin-like GTPase superfamily. IRG family. In terms of tissue distribution, abundantly expressed in semen (at protein level).

It is found in the cell projection. The protein localises to the cilium. Its subcellular location is the flagellum. It localises to the lipid droplet. The enzyme catalyses GTP + H2O = GDP + phosphate + H(+). In terms of biological role, required for sperm motility and therefore male fertility, via positive regulation of spermatozoa fibrous sheath formation. This chain is Interferon-inducible GTPase 5, found in Homo sapiens (Human).